Reading from the N-terminus, the 609-residue chain is Glutamine--fructose-6-phosphate aminotransferase [isomerizing] (609 aa).

The active-site Nucleophile; for GATase activity is the Cys2. The 217-residue stretch at 2-218 (CGIVGAIAQR…EGDIAEITRR (217 aa)) folds into the Glutamine amidotransferase type-2 domain. 2 SIS domains span residues 286 to 426 (ADDL…LKGL) and 458 to 599 (LAED…VDQP). The active-site For Fru-6P isomerization activity is the Lys604.

As to quaternary structure, homodimer.

The protein localises to the cytoplasm. It carries out the reaction D-fructose 6-phosphate + L-glutamine = D-glucosamine 6-phosphate + L-glutamate. In terms of biological role, catalyzes the first step in hexosamine metabolism, converting fructose-6P into glucosamine-6P using glutamine as a nitrogen source. In Salmonella typhi, this protein is Glutamine--fructose-6-phosphate aminotransferase [isomerizing].